The primary structure comprises 464 residues: MVYRPTAHEFDDLPKIEFIDSCPYQVFLEQYLKPCVPVLIGPKLTAQWKANTTWITSKGDPNILHSYILPDKPCTSRDNTSGNSLLNDNDIKNFIRSYAERIVNNEDKNVFLDSLLLSPNYEYLEENYGTIPVPLAYCNEKDRYGSQRRETVPLKSALHELRDEQVQLQCRQAPSNQALKSLYAKDMHLFRHLDPADFPYSTPDIFADDWLNAYVIDCESDDFRFAYLGSHLTTTGLHTDVYASHSFSVNLCGVKCWLFIDPKDLQTIASLYDDQQLPSWITKDDLFRGPLVNHRHLIKILFQYPGQTVFVPSGWYHQVLNIGTTLSINHNWCNASCILQMYTALKEQYEVSAESLKDLLEDGIVTKDRFSQVVTEVVEANYGWCWRRFWGMIKHQLKRRDAILHSSEYFSKWPIQPEFLPPLSWEYSILKNILLNDEPGSTFDSGSPPSSIVTIFKSLGDFKE.

One can recognise a JmjC domain in the interval 182 to 349; sequence LYAKDMHLFR…QMYTALKEQY (168 aa).

In Schizosaccharomyces pombe (strain 972 / ATCC 24843) (Fission yeast), this protein is JmjC domain-containing protein 1 (jmj1).